A 297-amino-acid chain; its full sequence is N-acetylneuraminate lyase (297 aa).

Positions 47 and 48 each coordinate aceneuramate. Residue Y137 is the Proton donor of the active site. K165 (schiff-base intermediate with substrate) is an active-site residue. Aceneuramate-binding residues include T167, G189, D191, E192, and S208.

Belongs to the DapA family. NanA subfamily. In terms of assembly, homotetramer.

The protein localises to the cytoplasm. It carries out the reaction aceneuramate = aldehydo-N-acetyl-D-mannosamine + pyruvate. It functions in the pathway amino-sugar metabolism; N-acetylneuraminate degradation; D-fructose 6-phosphate from N-acetylneuraminate: step 1/5. Catalyzes the reversible aldol cleavage of N-acetylneuraminic acid (sialic acid; Neu5Ac) to form pyruvate and N-acetylmannosamine (ManNAc) via a Schiff base intermediate. The polypeptide is N-acetylneuraminate lyase (Citrobacter koseri (strain ATCC BAA-895 / CDC 4225-83 / SGSC4696)).